A 522-amino-acid polypeptide reads, in one-letter code: Transactivator/viroplasmin protein (522 aa).

The segment covering lysine 487–glycine 500 has biased composition (basic and acidic residues). Positions lysine 487–aspartate 522 are disordered.

Belongs to the caulimoviridae viroplasmin family.

It localises to the host cytoplasm. In terms of biological role, enhances the ribosomal termination-reinitiation event leading to the translation of major open reading frames on the polycistronic viral RNAs. The polypeptide is Transactivator/viroplasmin protein (Arabidopsis thaliana (Mouse-ear cress)).